Reading from the N-terminus, the 110-residue chain is MAPWTRLLPLLALLSLWIPAPTRAFVNQHLCGSHLVEALYLVCGERGFFYTPKARREAEDLQGKDAELGEAPGAGGLQPSALEAPLQKRGIVEQCCASVCSLYQLEHYCN.

The signal sequence occupies residues 1-24 (MAPWTRLLPLLALLSLWIPAPTRA). 3 cysteine pairs are disulfide-bonded: cysteine 31-cysteine 96, cysteine 43-cysteine 109, and cysteine 95-cysteine 100. Positions 57–87 (EAEDLQGKDAELGEAPGAGGLQPSALEAPLQ) are cleaved as a propeptide — c peptide. The interval 60-80 (DLQGKDAELGEAPGAGGLQPS) is disordered.

It belongs to the insulin family. In terms of assembly, heterodimer of a B chain and an A chain linked by two disulfide bonds.

It is found in the secreted. In terms of biological role, insulin decreases blood glucose concentration. It increases cell permeability to monosaccharides, amino acids and fatty acids. It accelerates glycolysis, the pentose phosphate cycle, and glycogen synthesis in liver. This chain is Insulin (INS), found in Felis catus (Cat).